The following is a 152-amino-acid chain: Large ribosomal subunit protein bL9 (152 aa).

The protein belongs to the bacterial ribosomal protein bL9 family.

Its function is as follows. Binds to the 23S rRNA. The protein is Large ribosomal subunit protein bL9 of Gloeothece citriformis (strain PCC 7424) (Cyanothece sp. (strain PCC 7424)).